We begin with the raw amino-acid sequence, 885 residues long: Phycobiliprotein ApcE (885 aa).

Cys-185 contacts (2R,3E)-phycocyanobilin. 3 consecutive PBS-linker domains span residues 242–422, 498–680, and 694–871; these read DVQG…FRKV, KSIG…NSKK, and NSIQ…KQSS.

It belongs to the phycobilisome linker protein family. Contains one covalently linked bilin chromophore. This protein autochromophorylates (Potential).

It is found in the plastid. The protein localises to the chloroplast thylakoid membrane. In terms of biological role, this protein is postulated to act both as terminal energy acceptor and as a linker polypeptide that stabilizes the phycobilisome architecture. May have intrinsic bilin lyase activity. The protein is Phycobiliprotein ApcE (apcE) of Aglaothamnion neglectum (Red alga).